We begin with the raw amino-acid sequence, 524 residues long: Cytochrome P450 6k1 (524 aa).

Cysteine 464 is a binding site for heme.

The protein belongs to the cytochrome P450 family. It depends on heme as a cofactor.

It is found in the endoplasmic reticulum membrane. The protein localises to the microsome membrane. The sequence is that of Cytochrome P450 6k1 (CYP6K1) from Blattella germanica (German cockroach).